The chain runs to 476 residues: Small ribosomal subunit protein mS29 (476 aa).

The N-terminal 54 residues, 1–54 (MLPKFRSRSSIIKNTERISNILSGGKLTVCGSKLGGLYTFEKCTFNKYYSSSQY), are a transit peptide targeting the mitochondrion. Residues 58–97 (GRPVGGNIHSSSNQQRQKNSEAPRINEIPPSTSSVEKSTT) are disordered. Polar residues-rich tracts occupy residues 65–74 (IHSSSNQQRQ) and 86–97 (PPSTSSVEKSTT). Residue 200-207 (GAPGSGRS) coordinates ATP.

Belongs to the mitochondrion-specific ribosomal protein mS29 family. In terms of assembly, component of the mitochondrial small ribosomal subunit (mt-SSU). Mature yeast 74S mitochondrial ribosomes consist of a small (37S) and a large (54S) subunit. The 37S small subunit contains a 15S ribosomal RNA (15S mt-rRNA) and at least 32 different proteins. The 54S large subunit contains a 21S rRNA (21S mt-rRNA) and at least 45 different proteins.

The protein resides in the mitochondrion. Functionally, component of the mitochondrial ribosome (mitoribosome), a dedicated translation machinery responsible for the synthesis of mitochondrial genome-encoded proteins, including at least some of the essential transmembrane subunits of the mitochondrial respiratory chain. The mitoribosomes are attached to the mitochondrial inner membrane and translation products are cotranslationally integrated into the membrane. mS29 binds GTP and is probably an active GTPase. GTP hydrolysis may be linked to subunit association. mS29 also has an extraribosomal function, being required for maintenance of mitochondrial DNA. This chain is Small ribosomal subunit protein mS29 (rsm23), found in Schizosaccharomyces pombe (strain 972 / ATCC 24843) (Fission yeast).